We begin with the raw amino-acid sequence, 367 residues long: MYVFKALAGIVLALVATLAHAERIRDLTSVQGVRENSLIGYGLVVGLDGTGDQTTQTPFTTQTLNNMLSQLGITVPTGTNMQLKNVAAVMVTASYPPFARQGQTIDVVVSSMGNAKSLRGGTLLMTPLKGVDSQVYALAQGNILVGGAGASAGGSSVQVNQLNGGRITNGAIIERELPTQFGAGNTINLQLNDEDFTMAQQITDAINRARGYGSATALDARTVQVRVPSGNSSQVRFLADIQNMEVNVTPQDAKVVINSRTGSVVMNREVTLDSCAVAQGNLSVTVNRQLNVNQPNTPFGGGQTVVTPQTQIDLRQSGGSLQSVRSSANLNSVVRALNALGATPMDLMSILQSMQSAGCLRAKLEII.

Positions 1–21 (MYVFKALAGIVLALVATLAHA) are cleaved as a signal peptide.

The protein belongs to the FlgI family. As to quaternary structure, the basal body constitutes a major portion of the flagellar organelle and consists of four rings (L,P,S, and M) mounted on a central rod.

The protein resides in the periplasm. Its subcellular location is the bacterial flagellum basal body. In terms of biological role, assembles around the rod to form the L-ring and probably protects the motor/basal body from shearing forces during rotation. The polypeptide is Flagellar P-ring protein (Salmonella paratyphi C (strain RKS4594)).